We begin with the raw amino-acid sequence, 434 residues long: ATP-dependent protease ATPase subunit HslU (434 aa).

Residues valine 18, 60-65, aspartate 247, glutamate 312, and arginine 384 contribute to the ATP site; that span reads GVGKTE.

This sequence belongs to the ClpX chaperone family. HslU subfamily. As to quaternary structure, a double ring-shaped homohexamer of HslV is capped on each side by a ring-shaped HslU homohexamer. The assembly of the HslU/HslV complex is dependent on binding of ATP.

It is found in the cytoplasm. In terms of biological role, ATPase subunit of a proteasome-like degradation complex; this subunit has chaperone activity. The binding of ATP and its subsequent hydrolysis by HslU are essential for unfolding of protein substrates subsequently hydrolyzed by HslV. HslU recognizes the N-terminal part of its protein substrates and unfolds these before they are guided to HslV for hydrolysis. The protein is ATP-dependent protease ATPase subunit HslU of Phenylobacterium zucineum (strain HLK1).